The chain runs to 218 residues: MTQDEMKKAAGWAALEYVEKDSIVGVGTGSTVNHFIDALATMKAEIEGAVSSSEASTQKMKDLGIPVFDLNSVDELSVYVDGADEINAHMDMIKGGGAALTREKIVAAVADKFICIVDNTKQVDVLGEFPLPVEVIPMARSYVARQLVKLGGDPVYREGVITDNGNIILDVYNMKIVNPKELEQQINKIVGVVTNGLFANRGADVLLVGSPDGVKTLK.

Substrate is bound by residues 28–31, 81–84, and 94–97; these read TGST, DGAD, and KGGG. Glu103 acts as the Proton acceptor in catalysis. Lys121 is a substrate binding site.

The protein belongs to the ribose 5-phosphate isomerase family. In terms of assembly, homodimer.

The catalysed reaction is aldehydo-D-ribose 5-phosphate = D-ribulose 5-phosphate. It participates in carbohydrate degradation; pentose phosphate pathway; D-ribose 5-phosphate from D-ribulose 5-phosphate (non-oxidative stage): step 1/1. Its function is as follows. Catalyzes the reversible conversion of ribose-5-phosphate to ribulose 5-phosphate. This is Ribose-5-phosphate isomerase A from Shewanella woodyi (strain ATCC 51908 / MS32).